The sequence spans 396 residues: MNKYNYMENVLQHINANVISLRDDEIKGNNIILKEILNIIIDKLKTKNIMFRKMYTCIFFGGSYYDGLRVGHPNEFDLDLLLTLHNLTKPIITKANEPGYVFLKLGNINNFLNIDDFKMYKQLSNLINKNGYLDVRKVLSWFEGIVTSSLNDIKEGSIYNFQIKGNTYKGTIHKGGPAFTLKIKGPNGSNMDIDLVPCFRFTEEHWPQGFKKSTSQQKSFFIVPKPLPDSTKSHYWRLSFQEQERELINNKGRLKPALRLLKQMRDTLNHHRIASYYLKTVFLWQVEEIGVDQSHWNSSLSYVFVCALKRYKEFLDSDNLPYFWEKKNNLLSGLHEDTLKNIRGSILKVLTDIESNNKDPNAIVKYLLTPEEQKRIMNGGNPQQSANAENGSCLSM.

Residues Ser63 and 75-77 (EFD) contribute to the ATP site. Mg(2+)-binding residues include Glu75, Asp77, and Asp194. Asp194 serves as a coordination point for GTP. ATP contacts are provided by residues 241–244 (QEQE), Lys262, and 275–279 (SYYLK). Residues Val286, Glu287, and Asp292 each contribute to the Mn(2+) site. The disordered stretch occupies residues 376–396 (IMNGGNPQQSANAENGSCLSM). The segment covering 380–396 (GNPQQSANAENGSCLSM) has biased composition (polar residues).

It belongs to the mab-21 family. Requires Mg(2+) as cofactor. The cofactor is Mn(2+).

The enzyme catalyses GTP + ATP = 2',3'-cGAMP + 2 diphosphate. It catalyses the reaction GTP + ATP = pppGp(2'-5')A + diphosphate. The catalysed reaction is pppGp(2'-5')A = 2',3'-cGAMP + diphosphate. In terms of biological role, nucleotidyltransferase that catalyzes the formation of cyclic GMP-AMP (2',3'-cGAMP) from ATP and GTP and plays a key role in innate immunity. Acts as a key sensor of double-stranded RNA (dsRNA), the presence of dsRNA in the cytoplasm being a danger signal that triggers the immune responses. Directly binds dsRNA, activating the nucleotidyltransferase activity, leading to synthesis of 2',3'-cGAMP, a second messenger that binds to and activates Sting, thereby triggering the immune response via activation of the NF-kappa-B transcription factor. In Aethina tumida (Small hive beetle), this protein is Cyclic GMP-AMP synthase-like receptor.